A 696-amino-acid polypeptide reads, in one-letter code: Polyribonucleotide nucleotidyltransferase (696 aa).

Mg(2+) contacts are provided by aspartate 483 and aspartate 489. In terms of domain architecture, KH spans 550-609 (PRITTIYVKTDKIRDVIGSGGKNIRGITEATGVTIDIDDTGKINIASTDKAACDMAIKMI). The region spanning 619–687 (GKLYMGLVKK…KQGKIKLSRK (69 aa)) is the S1 motif domain.

This sequence belongs to the polyribonucleotide nucleotidyltransferase family. Mg(2+) is required as a cofactor.

It localises to the cytoplasm. The catalysed reaction is RNA(n+1) + phosphate = RNA(n) + a ribonucleoside 5'-diphosphate. Involved in mRNA degradation. Catalyzes the phosphorolysis of single-stranded polyribonucleotides processively in the 3'- to 5'-direction. The sequence is that of Polyribonucleotide nucleotidyltransferase from Geotalea daltonii (strain DSM 22248 / JCM 15807 / FRC-32) (Geobacter daltonii).